A 119-amino-acid polypeptide reads, in one-letter code: Protein TusC (119 aa).

This sequence belongs to the DsrF/TusC family. Heterohexamer, formed by a dimer of trimers. The hexameric TusBCD complex contains 2 copies each of TusB, TusC and TusD. The TusBCD complex interacts with TusE.

Its subcellular location is the cytoplasm. In terms of biological role, part of a sulfur-relay system required for 2-thiolation of 5-methylaminomethyl-2-thiouridine (mnm(5)s(2)U) at tRNA wobble positions. This Klebsiella pneumoniae subsp. pneumoniae (strain ATCC 700721 / MGH 78578) protein is Protein TusC.